The following is a 260-amino-acid chain: MHRYALKVEYNGAPFVGWQRQKEHPTIQGAIERALGKIAPGPHTIAAAGRTDAGVHAIAQVAHCDLERDWDPFRLSEALNYHLKPAPIAITACTAVDAEWHARFSARQRQYLFRILCRRAPATHQKGLVWQVKQKLDVTAMREAAALLIGQHDFTTFRSTICQAESPVKTLDRLDVNEVDTPYGREIHFDVRARSFLHNQVRSFVGTLERVGAGSSTPQDVARALALRDRAACGPVCPPHGLYLAHVVYDRPPFEAERSI.

The active-site Nucleophile is the aspartate 52. Residue tyrosine 111 coordinates substrate.

Belongs to the tRNA pseudouridine synthase TruA family. In terms of assembly, homodimer.

The catalysed reaction is uridine(38/39/40) in tRNA = pseudouridine(38/39/40) in tRNA. Functionally, formation of pseudouridine at positions 38, 39 and 40 in the anticodon stem and loop of transfer RNAs. The sequence is that of tRNA pseudouridine synthase A from Roseobacter denitrificans (strain ATCC 33942 / OCh 114) (Erythrobacter sp. (strain OCh 114)).